Here is a 468-residue protein sequence, read N- to C-terminus: Glutamate--tRNA ligase 2 (468 aa).

Positions Pro9–Gly19 match the 'HIGH' region motif. Residues Cys98, Cys100, Cys125, and His127 each coordinate Zn(2+). The 'KMSKS' region motif lies at Arg236–Arg240. Lys239 lines the ATP pocket.

The protein belongs to the class-I aminoacyl-tRNA synthetase family. Glutamate--tRNA ligase type 1 subfamily. As to quaternary structure, monomer. Requires Zn(2+) as cofactor.

It is found in the cytoplasm. The catalysed reaction is tRNA(Glu) + L-glutamate + ATP = L-glutamyl-tRNA(Glu) + AMP + diphosphate. In terms of biological role, catalyzes the attachment of glutamate to tRNA(Glu) in a two-step reaction: glutamate is first activated by ATP to form Glu-AMP and then transferred to the acceptor end of tRNA(Glu). This chain is Glutamate--tRNA ligase 2, found in Methylococcus capsulatus (strain ATCC 33009 / NCIMB 11132 / Bath).